The primary structure comprises 86 residues: Large ribosomal subunit protein bL27 (86 aa).

Residues 1–10 (MAQKKGGGST) show a composition bias toward gly residues. The interval 1–21 (MAQKKGGGSTRNGRDSESKRL) is disordered.

Belongs to the bacterial ribosomal protein bL27 family.

This Bordetella petrii (strain ATCC BAA-461 / DSM 12804 / CCUG 43448) protein is Large ribosomal subunit protein bL27.